The following is a 663-amino-acid chain: Bifunctional polymyxin resistance protein ArnA (663 aa).

The tract at residues 1–307 (MSSKAVVFAY…ELGLVDGSVL (307 aa)) is formyltransferase ArnAFT. Catalysis depends on H106, which acts as the Proton donor; for formyltransferase activity. (6R)-10-formyltetrahydrofolate contacts are provided by residues R116 and 138-142 (VKRAD). The tract at residues 317-663 (RRTRVLILGV…EAMLEIADKK (347 aa)) is dehydrogenase ArnADH. Residues D350 and 371–372 (DI) each bind NAD(+). Residues A396, Y401, and 435 to 436 (TS) contribute to the UDP-alpha-D-glucuronate site. Catalysis depends on E437, which acts as the Proton acceptor; for decarboxylase activity. Residues R463, N494, 528 to 537 (RLFDGGEQKR), and Y615 each bind UDP-alpha-D-glucuronate. The Proton donor; for decarboxylase activity role is filled by R621.

It in the N-terminal section; belongs to the Fmt family. UDP-L-Ara4N formyltransferase subfamily. This sequence in the C-terminal section; belongs to the NAD(P)-dependent epimerase/dehydratase family. UDP-glucuronic acid decarboxylase subfamily. As to quaternary structure, homohexamer, formed by a dimer of trimers.

It catalyses the reaction UDP-alpha-D-glucuronate + NAD(+) = UDP-beta-L-threo-pentopyranos-4-ulose + CO2 + NADH. The catalysed reaction is UDP-4-amino-4-deoxy-beta-L-arabinose + (6R)-10-formyltetrahydrofolate = UDP-4-deoxy-4-formamido-beta-L-arabinose + (6S)-5,6,7,8-tetrahydrofolate + H(+). It functions in the pathway nucleotide-sugar biosynthesis; UDP-4-deoxy-4-formamido-beta-L-arabinose biosynthesis; UDP-4-deoxy-4-formamido-beta-L-arabinose from UDP-alpha-D-glucuronate: step 1/3. It participates in nucleotide-sugar biosynthesis; UDP-4-deoxy-4-formamido-beta-L-arabinose biosynthesis; UDP-4-deoxy-4-formamido-beta-L-arabinose from UDP-alpha-D-glucuronate: step 3/3. The protein operates within bacterial outer membrane biogenesis; lipopolysaccharide biosynthesis. Its function is as follows. Bifunctional enzyme that catalyzes the oxidative decarboxylation of UDP-glucuronic acid (UDP-GlcUA) to UDP-4-keto-arabinose (UDP-Ara4O) and the addition of a formyl group to UDP-4-amino-4-deoxy-L-arabinose (UDP-L-Ara4N) to form UDP-L-4-formamido-arabinose (UDP-L-Ara4FN). The modified arabinose is attached to lipid A and is required for resistance to polymyxin and cationic antimicrobial peptides. This chain is Bifunctional polymyxin resistance protein ArnA, found in Pseudomonas fluorescens (strain SBW25).